The primary structure comprises 561 residues: Dihydroxy-acid dehydratase (561 aa).

Cysteine 51 is a [2Fe-2S] cluster binding site. Aspartate 83 is a Mg(2+) binding site. Cysteine 124 is a binding site for [2Fe-2S] cluster. Mg(2+)-binding residues include aspartate 125 and lysine 126. At lysine 126 the chain carries N6-carboxylysine. [2Fe-2S] cluster is bound at residue cysteine 196. Glutamate 448 contributes to the Mg(2+) binding site. The active-site Proton acceptor is serine 474.

The protein belongs to the IlvD/Edd family. In terms of assembly, homodimer. [2Fe-2S] cluster is required as a cofactor. It depends on Mg(2+) as a cofactor.

It carries out the reaction (2R)-2,3-dihydroxy-3-methylbutanoate = 3-methyl-2-oxobutanoate + H2O. It catalyses the reaction (2R,3R)-2,3-dihydroxy-3-methylpentanoate = (S)-3-methyl-2-oxopentanoate + H2O. The protein operates within amino-acid biosynthesis; L-isoleucine biosynthesis; L-isoleucine from 2-oxobutanoate: step 3/4. Its pathway is amino-acid biosynthesis; L-valine biosynthesis; L-valine from pyruvate: step 3/4. Functions in the biosynthesis of branched-chain amino acids. Catalyzes the dehydration of (2R,3R)-2,3-dihydroxy-3-methylpentanoate (2,3-dihydroxy-3-methylvalerate) into 2-oxo-3-methylpentanoate (2-oxo-3-methylvalerate) and of (2R)-2,3-dihydroxy-3-methylbutanoate (2,3-dihydroxyisovalerate) into 2-oxo-3-methylbutanoate (2-oxoisovalerate), the penultimate precursor to L-isoleucine and L-valine, respectively. The polypeptide is Dihydroxy-acid dehydratase (Pyrobaculum neutrophilum (strain DSM 2338 / JCM 9278 / NBRC 100436 / V24Sta) (Thermoproteus neutrophilus)).